We begin with the raw amino-acid sequence, 191 residues long: NAD(P)H dehydrogenase (quinone) (191 aa).

In terms of domain architecture, Flavodoxin-like spans I4–A184. Residues S10–T15, T83–F85, and S118–G124 contribute to the FMN site.

Belongs to the WrbA family. In terms of assembly, homodimer and homotetramer; in equilibrium. Requires FMN as cofactor.

The enzyme catalyses a quinone + NADH + H(+) = a quinol + NAD(+). It catalyses the reaction a quinone + NADPH + H(+) = a quinol + NADP(+). Its function is as follows. It seems to function in response to environmental stress when various electron transfer chains are affected or when the environment is highly oxidizing. It reduces quinones to the hydroquinone state to prevent interaction of the semiquinone with O2 and production of superoxide. It prefers NADH over NADPH. The chain is NAD(P)H dehydrogenase (quinone) from Archaeoglobus fulgidus (strain ATCC 49558 / DSM 4304 / JCM 9628 / NBRC 100126 / VC-16).